A 362-amino-acid chain; its full sequence is Probable dual-specificity RNA methyltransferase RlmN (362 aa).

The active-site Proton acceptor is the Glu105. Positions 111–344 (HEYGNSICVT…VTIRREQGHD (234 aa)) constitute a Radical SAM core domain. Residues Cys118 and Cys349 are joined by a disulfide bond. [4Fe-4S] cluster is bound by residues Cys125, Cys129, and Cys132. Residues 175 to 176 (GE), Ser207, 230 to 232 (SLH), and Asn306 contribute to the S-adenosyl-L-methionine site. The S-methylcysteine intermediate role is filled by Cys349.

It belongs to the radical SAM superfamily. RlmN family. The cofactor is [4Fe-4S] cluster.

Its subcellular location is the cytoplasm. The catalysed reaction is adenosine(2503) in 23S rRNA + 2 reduced [2Fe-2S]-[ferredoxin] + 2 S-adenosyl-L-methionine = 2-methyladenosine(2503) in 23S rRNA + 5'-deoxyadenosine + L-methionine + 2 oxidized [2Fe-2S]-[ferredoxin] + S-adenosyl-L-homocysteine. It catalyses the reaction adenosine(37) in tRNA + 2 reduced [2Fe-2S]-[ferredoxin] + 2 S-adenosyl-L-methionine = 2-methyladenosine(37) in tRNA + 5'-deoxyadenosine + L-methionine + 2 oxidized [2Fe-2S]-[ferredoxin] + S-adenosyl-L-homocysteine. Its function is as follows. Specifically methylates position 2 of adenine 2503 in 23S rRNA and position 2 of adenine 37 in tRNAs. The chain is Probable dual-specificity RNA methyltransferase RlmN from Bacillus thuringiensis subsp. konkukian (strain 97-27).